The sequence spans 460 residues: Cysteine--tRNA ligase (460 aa).

Residue Cys-28 coordinates Zn(2+). The 'HIGH' region motif lies at 30-40 (MTVYDYCHLGH). Residues Cys-209, His-234, and Glu-238 each coordinate Zn(2+). The 'KMSKS' region motif lies at 266–270 (KMSKS). Lys-269 serves as a coordination point for ATP.

The protein belongs to the class-I aminoacyl-tRNA synthetase family. Monomer. Requires Zn(2+) as cofactor.

It is found in the cytoplasm. It catalyses the reaction tRNA(Cys) + L-cysteine + ATP = L-cysteinyl-tRNA(Cys) + AMP + diphosphate. This chain is Cysteine--tRNA ligase, found in Pseudomonas savastanoi pv. phaseolicola (strain 1448A / Race 6) (Pseudomonas syringae pv. phaseolicola (strain 1448A / Race 6)).